A 560-amino-acid polypeptide reads, in one-letter code: Zinc finger protein 250 (560 aa).

One can recognise a KRAB domain in the interval 22 to 93 (LTFEDVAVLL…DRKGAKKSQG (72 aa)). Residues Lys125, Lys136, Lys148, and Lys162 each participate in a glycyl lysine isopeptide (Lys-Gly) (interchain with G-Cter in SUMO2) cross-link. Residues 199–221 (YMCVECGKCFGRSSHLLQHQRIH) form a C2H2-type 1 zinc finger. A Glycyl lysine isopeptide (Lys-Gly) (interchain with G-Cter in SUMO2) cross-link involves residue Lys225. 7 C2H2-type zinc fingers span residues 227 to 249 (YVCSVCGKAFSQSSVLSKHRRIH), 255 to 277 (YECNECGKAFRVSSDLAQHHKIH), 283 to 305 (HECLECRKAFTQLSHLIQHQRIH), 311 to 333 (YVCPLCGKAFNHSTVLRSHQRVH), 339 to 361 (HRCNECGKTFSVKRTLLQHQRIH), 367 to 389 (YTCSECGKAFSDRSVLIQHHNVH), and 395 to 417 (YECSECGKTFSHRSTLMNHERIH). Lys421 is covalently cross-linked (Glycyl lysine isopeptide (Lys-Gly) (interchain with G-Cter in SUMO2)). 5 C2H2-type zinc fingers span residues 423–445 (YACYECGKAFVQHSHLIQHQRVH), 451–473 (YVCGECGHAFSARRSLIQHERIH), 479–501 (FQCTECGKAFSLKATLIVHLRTH), 507–529 (YECNSCGKAFSQYSVLIQHQRIH), and 535–557 (YECGECGRAFNQHGHLIQHQKVH).

It belongs to the krueppel C2H2-type zinc-finger protein family.

The protein resides in the nucleus. May be involved in transcriptional regulation. The protein is Zinc finger protein 250 (ZNF250) of Homo sapiens (Human).